The sequence spans 568 residues: MSISTFNRCWSKVILETLVRHNVKHVCIAPGSRSTPLTLEAVRLQERGEVRCHTHFDERGLGFLALGMAKSTNSPVAVIVTSGTAAANLYPAIIEARQSGEKLIVLTADRPAELLECGANQAILQENMFASYPVATVNLPKPGQNYAAKWLISTLDQACHSQLVEKGVVHINVPFAEPLYEANVTEIDEHVWLGPVRRWLGQHKKWTEYQEPQLEVLMHEHWDDWRTKRGVIVAGKLPQGHGMGLKLWAETMGWVLLTDVQSGVEPTLPYADIWLANKTVREKLLQADLVVQLGAHFVSKRINQFLSDFKGEFWVVDESPKRLDPYHHIQTRFNAKAHLWLRAHPPLRQKPWLLEAMALSNFCSSFIEQQVGGSLNEASLAHHIERAFPKNAALFLGNSLFVRLVDALTKRTENYPIYTNRGASGIDGLIATAVGVGIGANQAVAAVVGDMSALYDLNSLALLKKVTQPFVLFVINNNGGAIFDMLPVEAEAKNAYYRLPHNLGFAEAASVFDLKYARPYTWADLGSVLKQAYMRKEATVIEIKAGPNDATNLYKRLLEQISFAVIGA.

It belongs to the TPP enzyme family. MenD subfamily. In terms of assembly, homodimer. It depends on Mg(2+) as a cofactor. Mn(2+) is required as a cofactor. Requires thiamine diphosphate as cofactor.

It carries out the reaction isochorismate + 2-oxoglutarate + H(+) = 5-enolpyruvoyl-6-hydroxy-2-succinyl-cyclohex-3-ene-1-carboxylate + CO2. It participates in quinol/quinone metabolism; 1,4-dihydroxy-2-naphthoate biosynthesis; 1,4-dihydroxy-2-naphthoate from chorismate: step 2/7. It functions in the pathway quinol/quinone metabolism; menaquinone biosynthesis. Its function is as follows. Catalyzes the thiamine diphosphate-dependent decarboxylation of 2-oxoglutarate and the subsequent addition of the resulting succinic semialdehyde-thiamine pyrophosphate anion to isochorismate to yield 2-succinyl-5-enolpyruvyl-6-hydroxy-3-cyclohexene-1-carboxylate (SEPHCHC). The protein is 2-succinyl-5-enolpyruvyl-6-hydroxy-3-cyclohexene-1-carboxylate synthase of Actinobacillus succinogenes (strain ATCC 55618 / DSM 22257 / CCUG 43843 / 130Z).